Reading from the N-terminus, the 199-residue chain is NAD(P)H dehydrogenase (quinone) (199 aa).

The region spanning 4–190 (VLVLYYSAYG…EAAKYQGAHV (187 aa)) is the Flavodoxin-like domain. Residues 10–15 (SAYGHI) and 78–80 (TRF) contribute to the FMN site. Residue tyrosine 12 coordinates NAD(+). Residue tryptophan 98 coordinates substrate. FMN contacts are provided by residues 113 to 119 (SSATQHG) and histidine 134.

It belongs to the WrbA family. FMN is required as a cofactor.

It carries out the reaction a quinone + NADH + H(+) = a quinol + NAD(+). The catalysed reaction is a quinone + NADPH + H(+) = a quinol + NADP(+). This Rhizobium rhizogenes (strain K84 / ATCC BAA-868) (Agrobacterium radiobacter) protein is NAD(P)H dehydrogenase (quinone).